A 346-amino-acid polypeptide reads, in one-letter code: Very-long-chain 3-oxoacyl-CoA reductase (346 aa).

The helical transmembrane segment at 26–46 (SAYFLLAAGSLFVASRALTFV) threads the bilayer. NADP(+) contacts are provided by Val71, Asp126, Asp134, Asn153, Tyr220, Lys224, Ile253, and Ser255. Residue Tyr220 is the Proton donor of the active site. The active-site Lowers pKa of active site Tyr is Lys224.

Belongs to the short-chain dehydrogenases/reductases (SDR) family.

The protein resides in the endoplasmic reticulum membrane. It carries out the reaction a very-long-chain (3R)-3-hydroxyacyl-CoA + NADP(+) = a very-long-chain 3-oxoacyl-CoA + NADPH + H(+). It functions in the pathway lipid metabolism; fatty acid biosynthesis. In terms of biological role, component of the microsomal membrane bound fatty acid elongation system, which produces the 26-carbon very long-chain fatty acids (VLCFA) from palmitate. Catalyzes the reduction of the 3-ketoacyl-CoA intermediate that is formed in each cycle of fatty acid elongation. VLCFAs serve as precursors for ceramide and sphingolipids. This chain is Very-long-chain 3-oxoacyl-CoA reductase, found in Aspergillus oryzae (strain ATCC 42149 / RIB 40) (Yellow koji mold).